Here is a 279-residue protein sequence, read N- to C-terminus: Protein SCO2 homolog, mitochondrial (279 aa).

The helical transmembrane segment at 73 to 90 threads the bilayer; the sequence is LVVTLLFGGGIIGTWWYV. At 91 to 279 the chain is on the mitochondrial intermembrane side; sequence HQEKEKRIQM…MKTFVRLFPD (189 aa). Positions 97-271 constitute a Thioredoxin domain; sequence RIQMQRLEQL…IAESIRNHMK (175 aa). Positions 145, 149, and 236 each coordinate Cu cation. C145 and C149 are oxidised to a cystine.

This sequence belongs to the SCO1/2 family. In terms of assembly, homodimer.

The protein resides in the mitochondrion inner membrane. Functionally, copper metallochaperone essential for the synthesis and maturation of cytochrome c oxidase subunit II (MT-CO2/COX2) by facilitating the incorporation of copper into the Cu(A) site of MT-CO2/COX2. Could also act as a thiol-disulfide oxidoreductase to regulate the redox state of the cysteines in SCO1 during maturation of MT-CO2/COX2. The protein is Protein SCO2 homolog, mitochondrial (sco2) of Danio rerio (Zebrafish).